Reading from the N-terminus, the 131-residue chain is Holin (131 aa).

The next 2 helical transmembrane spans lie at 9 to 29 (IYLL…WGGL) and 40 to 60 (IIAG…AGTV). Positions 74 to 104 (VDQVTKGVEQVLAARQSAEAEVAKVKQALET) form a coiled coil.

Belongs to the Mycobacterium phage D29 holin family. Homomultimer. Self-associates to form a pore.

The protein resides in the host cell inner membrane. Its function is as follows. Accumulates harmlessly in the cytoplasmic membrane until it reaches a critical concentration that triggers the formation of micron-scale pores (holes) causing host cell membrane disruption and endolysin escape into the periplasmic space. Determines the precise timing of host cell lysis. Participates with the endolysin protein in the sequential events which lead to the programmed host cell lysis releasing the mature viral particles from the host cell. The sequence is that of Holin (11) from Mycobacterium (Mycobacteriophage L5).